The sequence spans 216 residues: V-type ATP synthase subunit D (216 aa).

Belongs to the V-ATPase D subunit family.

Functionally, produces ATP from ADP in the presence of a proton gradient across the membrane. This Clostridium novyi (strain NT) protein is V-type ATP synthase subunit D.